The following is a 251-amino-acid chain: 3-deoxy-manno-octulosonate cytidylyltransferase (251 aa).

Belongs to the KdsB family.

Its subcellular location is the cytoplasm. It catalyses the reaction 3-deoxy-alpha-D-manno-oct-2-ulosonate + CTP = CMP-3-deoxy-beta-D-manno-octulosonate + diphosphate. It functions in the pathway nucleotide-sugar biosynthesis; CMP-3-deoxy-D-manno-octulosonate biosynthesis; CMP-3-deoxy-D-manno-octulosonate from 3-deoxy-D-manno-octulosonate and CTP: step 1/1. The protein operates within bacterial outer membrane biogenesis; lipopolysaccharide biosynthesis. Functionally, activates KDO (a required 8-carbon sugar) for incorporation into bacterial lipopolysaccharide in Gram-negative bacteria. In Vibrio vulnificus (strain YJ016), this protein is 3-deoxy-manno-octulosonate cytidylyltransferase.